The sequence spans 67 residues: Small ribosomal subunit protein bS21 (67 aa).

Basic and acidic residues predominate over residues 37-52; the sequence is EKPSERKAREAAEAVR. Residues 37-67 are disordered; sequence EKPSERKAREAAEAVRRARKMERKRLEREGF.

The protein belongs to the bacterial ribosomal protein bS21 family.

This Gluconacetobacter diazotrophicus (strain ATCC 49037 / DSM 5601 / CCUG 37298 / CIP 103539 / LMG 7603 / PAl5) protein is Small ribosomal subunit protein bS21.